The primary structure comprises 226 residues: Deoxyribose-phosphate aldolase (226 aa).

Catalysis depends on Asp-94, which acts as the Proton donor/acceptor. Lys-156 functions as the Schiff-base intermediate with acetaldehyde in the catalytic mechanism. Lys-185 serves as the catalytic Proton donor/acceptor.

Belongs to the DeoC/FbaB aldolase family. DeoC type 1 subfamily.

Its subcellular location is the cytoplasm. The enzyme catalyses 2-deoxy-D-ribose 5-phosphate = D-glyceraldehyde 3-phosphate + acetaldehyde. The protein operates within carbohydrate degradation; 2-deoxy-D-ribose 1-phosphate degradation; D-glyceraldehyde 3-phosphate and acetaldehyde from 2-deoxy-alpha-D-ribose 1-phosphate: step 2/2. In terms of biological role, catalyzes a reversible aldol reaction between acetaldehyde and D-glyceraldehyde 3-phosphate to generate 2-deoxy-D-ribose 5-phosphate. This chain is Deoxyribose-phosphate aldolase, found in Burkholderia lata (strain ATCC 17760 / DSM 23089 / LMG 22485 / NCIMB 9086 / R18194 / 383).